We begin with the raw amino-acid sequence, 308 residues long: Protoheme IX farnesyltransferase (308 aa).

A run of 9 helical transmembrane segments spans residues 31-51, 60-80, 110-130, 131-151, 157-177, 185-205, 232-252, 253-273, and 285-305; these read VGIV…AFYF, LDIV…SCVI, ALWF…MTNL, TAAG…TMWS, VNTI…WTAV, AWVL…ALAI, IIIW…LGLP, IVIL…VGYR, and FVYS…FTLF.

The protein belongs to the UbiA prenyltransferase family. Protoheme IX farnesyltransferase subfamily. As to quaternary structure, interacts with CtaA.

Its subcellular location is the cell membrane. The enzyme catalyses heme b + (2E,6E)-farnesyl diphosphate + H2O = Fe(II)-heme o + diphosphate. It participates in porphyrin-containing compound metabolism; heme O biosynthesis; heme O from protoheme: step 1/1. Its function is as follows. Converts heme B (protoheme IX) to heme O by substitution of the vinyl group on carbon 2 of heme B porphyrin ring with a hydroxyethyl farnesyl side group. The polypeptide is Protoheme IX farnesyltransferase (Bacillus licheniformis (strain ATCC 14580 / DSM 13 / JCM 2505 / CCUG 7422 / NBRC 12200 / NCIMB 9375 / NCTC 10341 / NRRL NRS-1264 / Gibson 46)).